Here is a 97-residue protein sequence, read N- to C-terminus: Aspartyl/glutamyl-tRNA(Asn/Gln) amidotransferase subunit C (97 aa).

The protein belongs to the GatC family. In terms of assembly, heterotrimer of A, B and C subunits.

The enzyme catalyses L-glutamyl-tRNA(Gln) + L-glutamine + ATP + H2O = L-glutaminyl-tRNA(Gln) + L-glutamate + ADP + phosphate + H(+). It carries out the reaction L-aspartyl-tRNA(Asn) + L-glutamine + ATP + H2O = L-asparaginyl-tRNA(Asn) + L-glutamate + ADP + phosphate + 2 H(+). Its function is as follows. Allows the formation of correctly charged Asn-tRNA(Asn) or Gln-tRNA(Gln) through the transamidation of misacylated Asp-tRNA(Asn) or Glu-tRNA(Gln) in organisms which lack either or both of asparaginyl-tRNA or glutaminyl-tRNA synthetases. The reaction takes place in the presence of glutamine and ATP through an activated phospho-Asp-tRNA(Asn) or phospho-Glu-tRNA(Gln). The sequence is that of Aspartyl/glutamyl-tRNA(Asn/Gln) amidotransferase subunit C from Anaeromyxobacter sp. (strain K).